The sequence spans 80 residues: Trefoil factor 3 (80 aa).

The N-terminal stretch at 1–21 is a signal peptide; the sequence is MEARMFWLLVVLLALASSSSA. The region spanning 30 to 73 is the P-type domain; sequence NQCAVPAKDRVDCGYPQVTPEQCNNRGCCFDSSIXGVPWCFKPL. 3 disulfide bridges follow: cysteine 32/cysteine 58, cysteine 42/cysteine 57, and cysteine 52/cysteine 69.

Monomer. Homodimer; disulfide-linked.

The protein localises to the secreted. Its subcellular location is the extracellular space. It localises to the extracellular matrix. The protein resides in the cytoplasm. Involved in the maintenance and repair of the intestinal mucosa. Promotes the mobility of epithelial cells in healing processes (motogen). This Sus scrofa (Pig) protein is Trefoil factor 3 (TFF3).